We begin with the raw amino-acid sequence, 316 residues long: Melanocyte-stimulating hormone receptor (316 aa).

Residues 1–37 (MPMQGAQRKLLGSLNSTPTATSNLGLAANHTGAPCLE) are Extracellular-facing. N-linked (GlcNAc...) asparagine glycosylation occurs at N29. The helical transmembrane segment at 38–63 (VSIPDGLFLSLGLVSLVENVLVVAAI) threads the bilayer. Over 64–72 (AKNRNLHSS) the chain is Cytoplasmic. The chain crosses the membrane as a helical span at residues 73 to 93 (MYCFICCLALSDLLVSGSNML). The Extracellular segment spans residues 94 to 118 (ETAVILLLETGALATRTSVVQQLHN). A helical membrane pass occupies residues 119–140 (TINVLTCSSMLCSLCFLGAIAV). Topologically, residues 141–163 (DRYISIFYALRYHSIMTLPRAQR) are cytoplasmic. A helical membrane pass occupies residues 164–183 (AIAAIWVASVLSSTLFITYY). The Extracellular segment spans residues 184-191 (DHAAVLLC). A helical membrane pass occupies residues 192–211 (LVVFFLAMLVLMAVLYVHML). At 212–240 (ARACQHAHGIIRLHKRQTPAHQAFGLRGA) the chain is on the cytoplasmic side. The helical transmembrane segment at 241–266 (ATLTILLGIFFLCWGPFFLHLTLVVF) threads the bilayer. At 267-279 (CPQHLTCSCIFKN) the chain is on the extracellular side. The helical transmembrane segment at 280-300 (FKVFLTLIICNTIIDPLIYAF) threads the bilayer. Residues 301–316 (RSQELRRTLKEVLCSW) lie on the Cytoplasmic side of the membrane. C314 carries S-palmitoyl cysteine lipidation.

This sequence belongs to the G-protein coupled receptor 1 family. Interacts with MGRN1, but does not undergo MGRN1-mediated ubiquitination; this interaction competes with GNAS-binding and thus inhibits agonist-induced cAMP production. Interacts with OPN3; the interaction results in a decrease in MC1R-mediated cAMP signaling and ultimately a decrease in melanin production in melanocytes.

It localises to the cell membrane. Its function is as follows. Receptor for MSH (alpha, beta and gamma) and ACTH. The activity of this receptor is mediated by G proteins which activate adenylate cyclase. Mediates melanogenesis, the production of eumelanin (black/brown) and phaeomelanin (red/yellow), via regulation of cAMP signaling in melanocytes. This chain is Melanocyte-stimulating hormone receptor (MC1R), found in Saguinus geoffroyi (Geoffroy's tamarin).